Consider the following 1853-residue polypeptide: Cellulosomal-scaffolding protein A (1853 aa).

An N-terminal signal peptide occupies residues 1-28; that stretch reads MRKVISMLLVVAMLTTIFAAMIPQTVSA. Cohesin domains are found at residues 29 to 182 and 183 to 322; these read ATMT…VPSD and GVVV…VNVG. Linker (Pro/Thr-rich) stretches follow at residues 323–363 and 523–559; these read NATP…PANT and GGSV…SDDP. The span at 323-364 shows a compositional bias: low complexity; that stretch reads NATPTKGATPTNTATPTKSATATPTRPSVPTNTPTNTPANTP. Disordered regions lie at residues 323-367 and 525-559; these read NATP…PVSG and SVVP…SDDP. Residues 365–523 enclose the CBM3 domain; sequence VSGNLKVEFY…GVLVWGKEPG (159 aa). The segment covering 525-555 has biased composition (low complexity); the sequence is SVVPSTQPVTTPPATTKPPATTKPPATTIPP. 7 Cohesin domains span residues 560-704, 724-866, 889-1031, 1054-1196, 1219-1361, 1384-1526, and 1548-1690; these read NAIK…NVGD, AVRI…VNVG, and KLTL…VLVT. One can recognise a Dockerin domain in the interval 1785 to 1852; that stretch reads IMMWVGDIVK…FGATSSDYDA (68 aa).

Post-translationally, O-glycosylated on most but not all Thr residues of the linker units. The reducing sugar is galactopyranose.

It localises to the secreted. Its function is as follows. Acts as a scaffolding protein in the cellulosome. It promotes binding of cellulose to the catalytic domains of the cellulolytic enzymes. The polypeptide is Cellulosomal-scaffolding protein A (cipA) (Acetivibrio thermocellus (strain ATCC 27405 / DSM 1237 / JCM 9322 / NBRC 103400 / NCIMB 10682 / NRRL B-4536 / VPI 7372) (Clostridium thermocellum)).